Consider the following 150-residue polypeptide: Dynein light chain Tctex-type protein 2B (150 aa).

It belongs to the dynein light chain Tctex-type family.

It is found in the dynein axonemal particle. In terms of biological role, acts as one of several non-catalytic accessory components of the cytoplasmic dynein 2 complex (dynein-2 complex), a motor protein complex that drives the movement of cargos along microtubules within cilia and flagella in concert with the intraflagellar transport (IFT) system. Required for proper retrograde ciliary transport. This Danio rerio (Zebrafish) protein is Dynein light chain Tctex-type protein 2B (dynlt2b).